A 141-amino-acid chain; its full sequence is Large ribosomal subunit protein uL16 (141 aa).

This sequence belongs to the universal ribosomal protein uL16 family. Part of the 50S ribosomal subunit.

Its function is as follows. Binds 23S rRNA and is also seen to make contacts with the A and possibly P site tRNAs. The protein is Large ribosomal subunit protein uL16 of Geobacillus thermodenitrificans (strain NG80-2).